A 68-amino-acid chain; its full sequence is uncharacterized protein (68 aa).

This is an uncharacterized protein from Escherichia coli (Bacteriophage T4).